The chain runs to 146 residues: Large ribosomal subunit protein uL15 (146 aa).

Positions 1-45 (MTIKLHHLRPAPGSKTERTRVGRGEGSKGKTAGRGTKGTKARKNV) are disordered. The segment covering 15-28 (KTERTRVGRGEGSK) has biased composition (basic and acidic residues).

Belongs to the universal ribosomal protein uL15 family. Part of the 50S ribosomal subunit.

Functionally, binds to the 23S rRNA. This chain is Large ribosomal subunit protein uL15, found in Mycobacteroides abscessus (strain ATCC 19977 / DSM 44196 / CCUG 20993 / CIP 104536 / JCM 13569 / NCTC 13031 / TMC 1543 / L948) (Mycobacterium abscessus).